A 649-amino-acid polypeptide reads, in one-letter code: MRLFIAEKPSLGRAIADVLPKPHRKGDGFIECGNGQVVTWCIGHLLEQAQPDAYDSRYARWNLADLPIVPEKWQLQPRPSVTKQLNVIKRFLHQAGEIIHAGDPDREGQLLVDEVLDYLQLPAEKRQQVRRCLINDLNPQAVERAIDRLRANSDFVPLCVSALARARADWLYGINMTRAYTILGRNAGYQGVLSVGRVQTPVLGLVVRRDEEIENFVAKDFFEVKAHIVTPADERFTAIWQPSEACEPYQDEEGRLLHRPLAEHVVNRINGQPALVTSYNDKRESESAPLPFSLSTLQIEAAKRFGLSAQNVLDICQKLYETHKLITYPRSDCRYLPEEHFAGRQAVMNAISVHAPDLLPQPVVNPDTRNRCWDDKKVDAHHAIIPTARSSSVHLTENEAKVYTLIARQYLMQFCPDAVFRKCVIELEIAKGKFVAKARFLAEAGWRTLLGSKERDEENDGTPLPVVAKGDELLCEKGEVVERQTQPPRHFTDATLLSAMTGIARFVQDKDLKKILRATDGLGTEATRAGIIELLFKRSFLTKKGRYIHSTDAGKALIHSLPEMAARPDMTAHWESVLTQISEKQCRYQDFMQPLVGTLYQLIEQAKRTPVKRFRGIVAPGGGDKKKSAPRKRAGKKSPPAAETGRQTE.

One can recognise a Toprim domain in the interval 1-134; sequence MRLFIAEKPS…KRQQVRRCLI (134 aa). Residues E7, D103, and D105 each contribute to the Mg(2+) site. One can recognise a Topo IA-type catalytic domain in the interval 155 to 603; that stretch reads FVPLCVSALA…PLVGTLYQLI (449 aa). The segment at 194–199 is interaction with DNA; the sequence is SVGRVQ. Catalysis depends on Y328, which acts as the O-(5'-phospho-DNA)-tyrosine intermediate. Positions 614–649 are disordered; it reads FRGIVAPGGGDKKKSAPRKRAGKKSPPAAETGRQTE.

The protein belongs to the type IA topoisomerase family. Mg(2+) is required as a cofactor.

The enzyme catalyses ATP-independent breakage of single-stranded DNA, followed by passage and rejoining.. Releases the supercoiling and torsional tension of DNA, which is introduced during the DNA replication and transcription, by transiently cleaving and rejoining one strand of the DNA duplex. Introduces a single-strand break via transesterification at a target site in duplex DNA. The scissile phosphodiester is attacked by the catalytic tyrosine of the enzyme, resulting in the formation of a DNA-(5'-phosphotyrosyl)-enzyme intermediate and the expulsion of a 3'-OH DNA strand. The free DNA strand then undergoes passage around the unbroken strand, thus removing DNA supercoils. Finally, in the religation step, the DNA 3'-OH attacks the covalent intermediate to expel the active-site tyrosine and restore the DNA phosphodiester backbone. This Salmonella typhimurium (strain LT2 / SGSC1412 / ATCC 700720) protein is DNA topoisomerase 3.